Consider the following 285-residue polypeptide: Transcription factor LBX1 (285 aa).

The segment covering 1 to 20 has biased composition (basic and acidic residues); sequence MTSKEDGKAAPGEERRRSPL. The segment at 1-36 is disordered; it reads MTSKEDGKAAPGEERRRSPLDHLPPPANSNKPLTPF. The homeobox DNA-binding region spans 125–184; that stretch reads RRKSRTAFTNHQIYELEKRFLYQKYLSPADRDQIAQQLGLTNAQVITWFQNRRAKLKRDL. Residues 212 to 285 form a disordered region; sequence EQNSEASGGG…EEDEEIDVDD (74 aa). Residues 218 to 230 show a composition bias toward gly residues; sequence SGGGGGGGGGGCG. Residues 272 to 285 show a composition bias toward acidic residues; it reads CSEDEEDEEIDVDD.

In terms of assembly, interacts with SKOR1 which acts as a transcriptional corepressor.

The protein resides in the nucleus. In terms of biological role, transcription factor required for the development of GABAergic interneurons in the dorsal horn of the spinal cord and migration and further development of hypaxial muscle precursor cells for limb muscles, diaphragm and hypoglossal cord. In Rattus norvegicus (Rat), this protein is Transcription factor LBX1.